Here is a 248-residue protein sequence, read N- to C-terminus: Cytochrome c oxidase subunit 2 (248 aa).

Topologically, residues 1–39 (MMKELLMNNMLNDVPTPWAMYFQDSATPNMEGIMELHNN) are mitochondrial intermembrane. The chain crosses the membrane as a helical span at residues 40 to 56 (VVFYLIIMLCFVTYMLY). Residues 57 to 87 (NISTVYNKSAVAYKYMNHGQFIEMVWTTFPA) lie on the Mitochondrial matrix side of the membrane. A helical transmembrane segment spans residues 88-104 (VMLLIMAFPSFMLLYIC). Over 105–248 (DEVMAPAMTI…ADFLTWIDEQ (144 aa)) the chain is Mitochondrial intermembrane. 6 residues coordinate Cu cation: His-183, Cys-218, Glu-220, Cys-222, His-226, and Met-229. Glu-220 serves as a coordination point for Mg(2+).

The protein belongs to the cytochrome c oxidase subunit 2 family. In terms of assembly, component of the cytochrome c oxidase (complex IV, CIV), a multisubunit enzyme composed of a catalytic core of 3 subunits and several supernumerary subunits. The complex exists as a monomer or a dimer and forms supercomplexes (SCs) in the inner mitochondrial membrane with ubiquinol-cytochrome c oxidoreductase (cytochrome b-c1 complex, complex III, CIII). Requires Cu cation as cofactor.

The protein localises to the mitochondrion inner membrane. The enzyme catalyses 4 Fe(II)-[cytochrome c] + O2 + 8 H(+)(in) = 4 Fe(III)-[cytochrome c] + 2 H2O + 4 H(+)(out). Component of the cytochrome c oxidase, the last enzyme in the mitochondrial electron transport chain which drives oxidative phosphorylation. The respiratory chain contains 3 multisubunit complexes succinate dehydrogenase (complex II, CII), ubiquinol-cytochrome c oxidoreductase (cytochrome b-c1 complex, complex III, CIII) and cytochrome c oxidase (complex IV, CIV), that cooperate to transfer electrons derived from NADH and succinate to molecular oxygen, creating an electrochemical gradient over the inner membrane that drives transmembrane transport and the ATP synthase. Cytochrome c oxidase is the component of the respiratory chain that catalyzes the reduction of oxygen to water. Electrons originating from reduced cytochrome c in the intermembrane space (IMS) are transferred via the dinuclear copper A center (CU(A)) of subunit 2 and heme A of subunit 1 to the active site in subunit 1, a binuclear center (BNC) formed by heme A3 and copper B (CU(B)). The BNC reduces molecular oxygen to 2 water molecules using 4 electrons from cytochrome c in the IMS and 4 protons from the mitochondrial matrix. The chain is Cytochrome c oxidase subunit 2 (COX2) from Brettanomyces naardenensis (Yeast).